Here is a 600-residue protein sequence, read N- to C-terminus: Adenine deaminase (600 aa).

Belongs to the metallo-dependent hydrolases superfamily. Adenine deaminase family. Requires Mn(2+) as cofactor.

It carries out the reaction adenine + H2O + H(+) = hypoxanthine + NH4(+). This is Adenine deaminase from Roseobacter denitrificans (strain ATCC 33942 / OCh 114) (Erythrobacter sp. (strain OCh 114)).